The sequence spans 98 residues: Small ribosomal subunit protein uS19 (98 aa).

A disordered region spans residues 77 to 98 (TRTFRGHAGGKAEKGGSAPKKK).

This sequence belongs to the universal ribosomal protein uS19 family.

Functionally, protein S19 forms a complex with S13 that binds strongly to the 16S ribosomal RNA. In Chlorobium phaeobacteroides (strain DSM 266 / SMG 266 / 2430), this protein is Small ribosomal subunit protein uS19.